Consider the following 153-residue polypeptide: FAD synthase (153 aa).

ATP-binding positions include 9–10 (TF), 14–17 (HPGH), D97, and Y124.

This sequence belongs to the archaeal FAD synthase family. Homodimer. It depends on a divalent metal cation as a cofactor.

The catalysed reaction is FMN + ATP + H(+) = FAD + diphosphate. It functions in the pathway cofactor biosynthesis; FAD biosynthesis; FAD from FMN: step 1/1. Its function is as follows. Catalyzes the transfer of the AMP portion of ATP to flavin mononucleotide (FMN) to produce flavin adenine dinucleotide (FAD) coenzyme. In Methanobrevibacter smithii (strain ATCC 35061 / DSM 861 / OCM 144 / PS), this protein is FAD synthase.